The chain runs to 499 residues: Importin subunit alpha-8 (499 aa).

One can recognise an IBB domain in the interval 1-57 (MATSKAPKERLKNYKYRGKEMSLPRQQRIASSLQLRKTRKDEQVLKRRNIDLFSSDM). 8 ARM repeats span residues 101–141 (TPPL…NIAS), 144–183 (SEQT…NIAG), 186–226 (AEFR…NLCR), 229–268 (DPYP…YLTK), 271–310 (KEYI…NIVA), 313–352 (DEQT…NVAA), 354–393 (PRHQ…NIAT), and 397–436 (QDQL…YLLQ).

The protein belongs to the importin alpha family. As to quaternary structure, binds to importin subunit beta-1/KPNB1 via the IBB domain; this complex dissociates in the presence of RAN-GTP. Shows a limited binding to the RB1 nuclear localization signal (NLS), but not to the SV40, nor NPM1 NLSs. Interacts with RSL1D1. As to expression, expressed predominantly in ovary. Isoform 1 is the predominant form.

It is found in the nucleus. Functions in nuclear protein import. The polypeptide is Importin subunit alpha-8 (Kpna7) (Mus musculus (Mouse)).